The following is a 111-amino-acid chain: uncharacterized protein (111 aa).

Residues 4–51 (LGQVKVLEEKVAKAVHLVQMLKEENAALRAEIDGRGKRITELEQLVLX) adopt a coiled-coil conformation.

This is an uncharacterized protein from Treponema pallidum (strain Nichols).